Here is a 241-residue protein sequence, read N- to C-terminus: Small ribosomal subunit protein uS2 (241 aa).

It belongs to the universal ribosomal protein uS2 family.

The protein is Small ribosomal subunit protein uS2 of Klebsiella pneumoniae (strain 342).